The primary structure comprises 461 residues: Fumarate hydratase class II (461 aa).

Substrate-binding positions include 97–99 (SGT), 127–130 (HPND), 137–139 (SSN), and threonine 185. Histidine 186 functions as the Proton donor/acceptor in the catalytic mechanism. The active site involves serine 316. Residues serine 317 and 322–324 (KVN) contribute to the substrate site.

Belongs to the class-II fumarase/aspartase family. Fumarase subfamily. As to quaternary structure, homotetramer.

It localises to the cytoplasm. The catalysed reaction is (S)-malate = fumarate + H2O. Its pathway is carbohydrate metabolism; tricarboxylic acid cycle; (S)-malate from fumarate: step 1/1. Its function is as follows. Involved in the TCA cycle. Catalyzes the stereospecific interconversion of fumarate to L-malate. The polypeptide is Fumarate hydratase class II (Staphylococcus saprophyticus subsp. saprophyticus (strain ATCC 15305 / DSM 20229 / NCIMB 8711 / NCTC 7292 / S-41)).